A 228-amino-acid polypeptide reads, in one-letter code: Non-specific lipid-transfer protein EPAD1 (228 aa).

Residues 1–24 (MERSHLAVLLGLLAFAAGVPAAAA) form the signal peptide. Cystine bridges form between Cys40-Cys62, Cys63-Cys105, and Cys78-Cys119. An N-linked (GlcNAc...) asparagine glycan is attached at Asn94. The disordered stretch occupies residues 124-207 (PPASIVTAPP…PPRSGASSSL (84 aa)). Positions 145–162 (REAPPPPPAAEKLSPPPQ) are enriched in pro residues.

Belongs to the plant LTP family. Expressed in young panicles. Specifically expressed in pollen mother cells and young microspores.

Its subcellular location is the cell membrane. Plant non-specific lipid-transfer protein that binds phospholipids in vitro. Required for correct pollen exine patterning by controlling the continuity and homogeneity of the primexine distribution. This is Non-specific lipid-transfer protein EPAD1 from Oryza sativa subsp. japonica (Rice).